The primary structure comprises 33 residues: MSDIN-like toxin proprotein 6 (33 aa).

Residues Met1–Pro10 constitute a propeptide that is removed on maturation. Residues Leu11–Pro20 constitute a cross-link (cyclopeptide (Leu-Pro)). The propeptide occupies Ser21–Arg33.

Belongs to the MSDIN fungal toxin family. Processed by the macrocyclase-peptidase enzyme POPB to yield a toxic cyclic decapeptide. POPB first removes 10 residues from the N-terminus. Conformational trapping of the remaining peptide forces the enzyme to release this intermediate rather than proceed to macrocyclization. The enzyme rebinds the remaining peptide in a different conformation and catalyzes macrocyclization of the N-terminal 10 residues.

Functionally, probable toxin that belongs to the MSDIN-like toxin family responsible for a large number of food poisoning cases and deaths. This chain is MSDIN-like toxin proprotein 6, found in Amanita phalloides (Death cap).